A 457-amino-acid chain; its full sequence is tRNA-2-methylthio-N(6)-dimethylallyladenosine synthase (457 aa).

The MTTase N-terminal domain occupies 19 to 134 (RKLFIETYGC…LPNLVGAVEH (116 aa)). [4Fe-4S] cluster-binding residues include Cys-28, Cys-64, Cys-98, Cys-172, Cys-176, and Cys-179. In terms of domain architecture, Radical SAM core spans 158–390 (PGVHISGFVS…IDLQNKLSEE (233 aa)). Residues 393–456 (LRDIGKTFEV…SATLFGEPVE (64 aa)) form the TRAM domain.

This sequence belongs to the methylthiotransferase family. MiaB subfamily. In terms of assembly, monomer. [4Fe-4S] cluster serves as cofactor.

It is found in the cytoplasm. It catalyses the reaction N(6)-dimethylallyladenosine(37) in tRNA + (sulfur carrier)-SH + AH2 + 2 S-adenosyl-L-methionine = 2-methylsulfanyl-N(6)-dimethylallyladenosine(37) in tRNA + (sulfur carrier)-H + 5'-deoxyadenosine + L-methionine + A + S-adenosyl-L-homocysteine + 2 H(+). Its function is as follows. Catalyzes the methylthiolation of N6-(dimethylallyl)adenosine (i(6)A), leading to the formation of 2-methylthio-N6-(dimethylallyl)adenosine (ms(2)i(6)A) at position 37 in tRNAs that read codons beginning with uridine. The protein is tRNA-2-methylthio-N(6)-dimethylallyladenosine synthase of Parabacteroides distasonis (strain ATCC 8503 / DSM 20701 / CIP 104284 / JCM 5825 / NCTC 11152).